Here is a 377-residue protein sequence, read N- to C-terminus: Peroxisomal membrane protein PEX14 (377 aa).

Over residues 1–20 the composition is skewed to low complexity; it reads MASSEQAEQPSQPSSSPGSE. The tract at residues 1-23 is disordered; it reads MASSEQAEQPSQPSSSPGSENVV. Alanine 2 carries the N-acetylalanine modification. Over 2 to 108 the chain is Peroxisomal; it reads ASSEQAEQPS…CSPGSSRWRD (107 aa). Lysine 34 is subject to N6-acetyllysine. Residues 109-126 form a helical membrane-spanning segment; sequence YGALAIIMAGIAFGFHQL. Residues 127–377 lie on the Cytoplasmic side of the membrane; the sequence is YKKYLLPLIL…EGASNESERH (251 aa). Positions 230-377 are disordered; sequence PPSPSAPKIP…EGASNESERH (148 aa). Phosphoserine is present on serine 232. Composition is skewed to low complexity over residues 244-259 and 265-275; these read PVKS…VNHH and SPVSNESTSSS. 2 positions are modified to phosphoserine: serine 282 and serine 335. A compositionally biased stretch (acidic residues) spans 323–342; it reads KEEEEEEEEEDVSHVDEEDV. Residues 360 to 377 show a composition bias toward basic and acidic residues; that stretch reads QVDKLRRPEGASNESERH.

It belongs to the peroxin-14 family. As to quaternary structure, interacts with PEX13; forming the PEX13-PEX14 docking complex. Interacts with PEX5 (via WxxxF/Y motifs). Interacts with PEX19. Interacts with tubulin.

It localises to the peroxisome membrane. Its function is as follows. Component of the PEX13-PEX14 docking complex, a translocon channel that specifically mediates the import of peroxisomal cargo proteins bound to PEX5 receptor. The PEX13-PEX14 docking complex forms a large import pore which can be opened to a diameter of about 9 nm. Mechanistically, PEX5 receptor along with cargo proteins associates with the PEX14 subunit of the PEX13-PEX14 docking complex in the cytosol, leading to the insertion of the receptor into the organelle membrane with the concomitant translocation of the cargo into the peroxisome matrix. Plays a key role for peroxisome movement through a direct interaction with tubulin. The chain is Peroxisomal membrane protein PEX14 from Cricetulus longicaudatus (Long-tailed dwarf hamster).